The primary structure comprises 385 residues: Protein hunchback (385 aa).

Disordered regions lie at residues 1 to 94 (IGGI…YDAM) and 124 to 216 (ESRA…PGLR). Low complexity predominate over residues 63–77 (SASPSSSSKDSNGHS). Composition is skewed to basic and acidic residues over residues 126–135 (RASDARDHSP) and 173–203 (PERRSFDRFHDSGFDGVDHNKHDGDDGREGS). C2H2-type zinc fingers lie at residues 229 to 251 (FKCKQCEFVAVTKLSFWEHSKEH), 258 to 280 (LCCRKCPFVTEYKHHLEYHMRNH), 286 to 308 (FQCSQCSYSCVNKSMLNSHLKSH), and 314 to 338 (YRCADCNYATKYCDSLKLHLRKYQH). The segment at 361–385 (TRRGPKQKPLSKIFEQQTGTNNHSP) is disordered. The span at 374–385 (FEQQTGTNNHSP) shows a compositional bias: polar residues.

It belongs to the hunchback C2H2-type zinc-finger protein family.

Its subcellular location is the nucleus. Its function is as follows. Gap class segmentation protein that controls development of head structures. The polypeptide is Protein hunchback (hb) (Bombyx mori (Silk moth)).